A 372-amino-acid chain; its full sequence is MSNQHILLVSSLLPVGSNISTWWNFGSMLLTCLMLQILTGFFLAIHYTANINLAFSSVIHIMRDVPYGWIMQNLHAISASLFFICVYIHIARGLYYGLYLNKEVWLSGMTLLVFLMATAFFGYVLPWGQMSFWAATVITNLLTAMPYLGTMLTTWLWGGFSINDPTLTRFFALHFILPFVIISLSSIHIMLLHNEGSNNPLGTNSDIDKIPFHPYHSYKDMLMITTMITLLFLILSFSPNLLNDPENFSKANPIVTPQHIKPEWYFLFAYGILRSIPNKLGGTLALLLSVVILTTAPFTHTSHTRSMIFRPLSQILFWTFIATFITITWTASKPVEPPFILISQTTSIFYFSFFIMAPLLGWAENKIMMLNN.

A run of 4 helical transmembrane segments spans residues 25–45 (FGSM…FLAI), 69–90 (WIMQ…YIHI), 105–125 (WLSG…GYVL), and 170–190 (FFAL…IHIM). Heme b-binding residues include His75 and His89. Heme b contacts are provided by His174 and His188. His193 is a binding site for a ubiquinone. 4 helical membrane-spanning segments follow: residues 218–238 (YKDM…LSFS), 280–300 (LGGT…PFTH), 312–332 (LSQI…WTAS), and 339–358 (FILI…IMAP).

The protein belongs to the cytochrome b family. The cytochrome bc1 complex contains 3 respiratory subunits (MT-CYB, CYC1 and UQCRFS1), 2 core proteins (UQCRC1 and UQCRC2) and probably 6 low-molecular weight proteins. It depends on heme b as a cofactor.

The protein resides in the mitochondrion inner membrane. Functionally, component of the ubiquinol-cytochrome c reductase complex (complex III or cytochrome b-c1 complex) that is part of the mitochondrial respiratory chain. The b-c1 complex mediates electron transfer from ubiquinol to cytochrome c. Contributes to the generation of a proton gradient across the mitochondrial membrane that is then used for ATP synthesis. The protein is Cytochrome b (MT-CYB) of Hemachatus haemachatus (Rinkhals).